Consider the following 228-residue polypeptide: MKSVGLEEMMEAGVHFGHQTRGWNPKMSSYIYGNRNGIHLIDLVQTARLLSEACDFLFNAAKEGKEFLFVGTKSQASDIIASEALRAESHYVNQRWLGGMLTNWSTIKTRIRKLKDLEQKEKNGILDTLPKKEAAVLKRQLYKLRKYLSGLQDMKYLPDVVIIVDQKREINAVKECIKLGIPTISLVDTNCDPTLADLPIPANDDAIRSINLLVSKLADAIYEGQRVK.

It belongs to the universal ribosomal protein uS2 family.

It is found in the plastid. The protein resides in the chloroplast. This Mesostigma viride (Green alga) protein is Small ribosomal subunit protein uS2c (rps2).